Here is a 546-residue protein sequence, read N- to C-terminus: Carboxypeptidase Y homolog A (546 aa).

The N-terminal stretch at 1–17 (MKLLASTVLMGAAAASI) is a signal peptide. The propeptide occupies 18 to 132 (APQQQVLKNP…KLEKYNMRAK (115 aa)). 5 disulfides stabilise this stretch: C186-C426, C320-C334, C344-C367, C351-C360, and C389-C396. Residue N217 is glycosylated (N-linked (GlcNAc...) asparagine). The active site involves S273. D465 is a catalytic residue. The N-linked (GlcNAc...) asparagine glycan is linked to N512. Residue H523 is part of the active site.

It belongs to the peptidase S10 family.

The protein localises to the vacuole. The enzyme catalyses Release of a C-terminal amino acid with broad specificity.. Vacuolar carboxypeptidase involved in degradation of small peptides. Digests preferentially peptides containing an aliphatic or hydrophobic residue in P1' position, as well as methionine, leucine or phenylalanine in P1 position of ester substrate. The polypeptide is Carboxypeptidase Y homolog A (cpyA) (Sclerotinia sclerotiorum (strain ATCC 18683 / 1980 / Ss-1) (White mold)).